We begin with the raw amino-acid sequence, 190 residues long: 3-isopropylmalate dehydratase small subunit (190 aa).

It belongs to the LeuD family. LeuD type 1 subfamily. As to quaternary structure, heterodimer of LeuC and LeuD.

The catalysed reaction is (2R,3S)-3-isopropylmalate = (2S)-2-isopropylmalate. It functions in the pathway amino-acid biosynthesis; L-leucine biosynthesis; L-leucine from 3-methyl-2-oxobutanoate: step 2/4. Catalyzes the isomerization between 2-isopropylmalate and 3-isopropylmalate, via the formation of 2-isopropylmaleate. The sequence is that of 3-isopropylmalate dehydratase small subunit from Staphylococcus aureus (strain MRSA252).